A 429-amino-acid polypeptide reads, in one-letter code: Glutamyl-tRNA reductase (429 aa).

Residues T50–R53, S110, E115–Q117, and Q121 contribute to the substrate site. The Nucleophile role is filled by C51. An NADP(+)-binding site is contributed by G190–A195.

Belongs to the glutamyl-tRNA reductase family. Homodimer.

It catalyses the reaction (S)-4-amino-5-oxopentanoate + tRNA(Glu) + NADP(+) = L-glutamyl-tRNA(Glu) + NADPH + H(+). Its pathway is porphyrin-containing compound metabolism; protoporphyrin-IX biosynthesis; 5-aminolevulinate from L-glutamyl-tRNA(Glu): step 1/2. Catalyzes the NADPH-dependent reduction of glutamyl-tRNA(Glu) to glutamate 1-semialdehyde (GSA). This chain is Glutamyl-tRNA reductase, found in Campylobacter hominis (strain ATCC BAA-381 / DSM 21671 / CCUG 45161 / LMG 19568 / NCTC 13146 / CH001A).